We begin with the raw amino-acid sequence, 95 residues long: NADH-quinone oxidoreductase subunit K (95 aa).

The next 3 helical transmembrane spans lie at 1–21 (MSYL…VLTR), 25–45 (ILVF…LVGF), and 59–79 (MVIA…VAIF).

It belongs to the complex I subunit 4L family. In terms of assembly, NDH-1 is composed of 15 different subunits. Subunits NuoA, H, J, K, L, M, N constitute the membrane sector of the complex.

The protein localises to the cell inner membrane. The catalysed reaction is a quinone + NADH + 5 H(+)(in) = a quinol + NAD(+) + 4 H(+)(out). Functionally, NDH-1 shuttles electrons from NADH, via FMN and iron-sulfur (Fe-S) centers, to quinones in the respiratory chain. The immediate electron acceptor for the enzyme in this species is believed to be a menaquinone. Couples the redox reaction to proton translocation (for every two electrons transferred, four hydrogen ions are translocated across the cytoplasmic membrane), and thus conserves the redox energy in a proton gradient. The polypeptide is NADH-quinone oxidoreductase subunit K (Thermus thermophilus (strain ATCC BAA-163 / DSM 7039 / HB27)).